Consider the following 228-residue polypeptide: ATP-dependent dethiobiotin synthetase BioD (228 aa).

13 to 18 (DIGKTF) is an ATP binding site. Position 17 (threonine 17) interacts with Mg(2+). The active site involves lysine 38. Position 42 (serine 42) interacts with substrate. ATP contacts are provided by residues aspartate 55, 116-119 (EGSG), 179-180 (NK), and 208-210 (PKI). The Mg(2+) site is built by aspartate 55 and glutamate 116.

Belongs to the dethiobiotin synthetase family. Homodimer. The cofactor is Mg(2+).

It is found in the cytoplasm. It catalyses the reaction (7R,8S)-7,8-diammoniononanoate + CO2 + ATP = (4R,5S)-dethiobiotin + ADP + phosphate + 3 H(+). It participates in cofactor biosynthesis; biotin biosynthesis; biotin from 7,8-diaminononanoate: step 1/2. Catalyzes a mechanistically unusual reaction, the ATP-dependent insertion of CO2 between the N7 and N8 nitrogen atoms of 7,8-diaminopelargonic acid (DAPA, also called 7,8-diammoniononanoate) to form a ureido ring. This Clostridium perfringens (strain ATCC 13124 / DSM 756 / JCM 1290 / NCIMB 6125 / NCTC 8237 / Type A) protein is ATP-dependent dethiobiotin synthetase BioD.